Consider the following 91-residue polypeptide: Sec-independent protein translocase protein TatA (91 aa).

A helical membrane pass occupies residues 1–21 (MGAMSPWHWAIVALVVIILFG). Residues 44 to 91 (KEMQNDNSTPAPTAQQSAPAELPVADTTTAPVTPPAPVQPQHTEPKSA) are disordered. The span at 51–74 (STPAPTAQQSAPAELPVADTTTAP) shows a compositional bias: low complexity.

The protein belongs to the TatA/E family. As to quaternary structure, the Tat system comprises two distinct complexes: a TatABC complex, containing multiple copies of TatA, TatB and TatC subunits, and a separate TatA complex, containing only TatA subunits. Substrates initially bind to the TatABC complex, which probably triggers association of the separate TatA complex to form the active translocon.

Its subcellular location is the cell membrane. Part of the twin-arginine translocation (Tat) system that transports large folded proteins containing a characteristic twin-arginine motif in their signal peptide across membranes. TatA could form the protein-conducting channel of the Tat system. In Rhodococcus jostii (strain RHA1), this protein is Sec-independent protein translocase protein TatA.